We begin with the raw amino-acid sequence, 334 residues long: Aspartate carbamoyltransferase catalytic subunit (334 aa).

The carbamoyl phosphate site is built by Arg70 and Thr71. Lys98 provides a ligand contact to L-aspartate. Carbamoyl phosphate is bound by residues Arg120, His150, and Gln153. Residues Arg183 and Arg238 each coordinate L-aspartate. Carbamoyl phosphate contacts are provided by Gly279 and Pro280.

This sequence belongs to the aspartate/ornithine carbamoyltransferase superfamily. ATCase family. Heterododecamer (2C3:3R2) of six catalytic PyrB chains organized as two trimers (C3), and six regulatory PyrI chains organized as three dimers (R2).

It carries out the reaction carbamoyl phosphate + L-aspartate = N-carbamoyl-L-aspartate + phosphate + H(+). It participates in pyrimidine metabolism; UMP biosynthesis via de novo pathway; (S)-dihydroorotate from bicarbonate: step 2/3. In terms of biological role, catalyzes the condensation of carbamoyl phosphate and aspartate to form carbamoyl aspartate and inorganic phosphate, the committed step in the de novo pyrimidine nucleotide biosynthesis pathway. This is Aspartate carbamoyltransferase catalytic subunit from Marinomonas sp. (strain MWYL1).